The primary structure comprises 310 residues: Aspartate carbamoyltransferase catalytic subunit (310 aa).

Positions 60 and 61 each coordinate carbamoyl phosphate. Residue lysine 88 participates in L-aspartate binding. 3 residues coordinate carbamoyl phosphate: arginine 110, histidine 138, and glutamine 141. Positions 171 and 225 each coordinate L-aspartate. Carbamoyl phosphate-binding residues include glycine 266 and proline 267.

It belongs to the aspartate/ornithine carbamoyltransferase superfamily. ATCase family. Heterododecamer (2C3:3R2) of six catalytic PyrB chains organized as two trimers (C3), and six regulatory PyrI chains organized as three dimers (R2).

The enzyme catalyses carbamoyl phosphate + L-aspartate = N-carbamoyl-L-aspartate + phosphate + H(+). Its pathway is pyrimidine metabolism; UMP biosynthesis via de novo pathway; (S)-dihydroorotate from bicarbonate: step 2/3. Functionally, catalyzes the condensation of carbamoyl phosphate and aspartate to form carbamoyl aspartate and inorganic phosphate, the committed step in the de novo pyrimidine nucleotide biosynthesis pathway. This Christiangramia forsetii (strain DSM 17595 / CGMCC 1.15422 / KT0803) (Gramella forsetii) protein is Aspartate carbamoyltransferase catalytic subunit.